The sequence spans 91 residues: MHCLKAVVKGKVQGVYFRDFTRTQAIRLGLCGYAQNLESGTDVEVIAEGDKDILLEFLKLLRSGPPHAEVQEVEVSWSSTNGNYGDFHIKY.

The Acylphosphatase-like domain maps to 3 to 91 (CLKAVVKGKV…GNYGDFHIKY (89 aa)). Catalysis depends on residues arginine 18 and asparagine 36.

It belongs to the acylphosphatase family.

The enzyme catalyses an acyl phosphate + H2O = a carboxylate + phosphate + H(+). The protein is Acylphosphatase (acyP) of Dehalococcoides mccartyi (strain ATCC BAA-2266 / KCTC 15142 / 195) (Dehalococcoides ethenogenes (strain 195)).